A 228-amino-acid chain; its full sequence is Octanoyltransferase (228 aa).

The BPL/LPL catalytic domain maps to 31–212 (GETDGILILL…KFSEVFGIHF (182 aa)). Residues 76-83 (RGGKITFH), 143-145 (AIG), and 156-158 (GIA) each bind substrate. Cys174 serves as the catalytic Acyl-thioester intermediate.

Belongs to the LipB family.

The protein resides in the cytoplasm. The catalysed reaction is octanoyl-[ACP] + L-lysyl-[protein] = N(6)-octanoyl-L-lysyl-[protein] + holo-[ACP] + H(+). It functions in the pathway protein modification; protein lipoylation via endogenous pathway; protein N(6)-(lipoyl)lysine from octanoyl-[acyl-carrier-protein]: step 1/2. Its function is as follows. Catalyzes the transfer of endogenously produced octanoic acid from octanoyl-acyl-carrier-protein onto the lipoyl domains of lipoate-dependent enzymes. Lipoyl-ACP can also act as a substrate although octanoyl-ACP is likely to be the physiological substrate. In Thermoanaerobacter pseudethanolicus (strain ATCC 33223 / 39E) (Clostridium thermohydrosulfuricum), this protein is Octanoyltransferase.